Here is a 1047-residue protein sequence, read N- to C-terminus: Ribonucleoside-diphosphate reductase subunit alpha (1047 aa).

ATP-cone domains are found at residues Cys-9–Arg-111, Leu-118–Arg-219, and Phe-237–Asp-327. Residues Thr-442, Ser-457 to Cys-458, Gly-486, Asn-670 to Glu-674, and Pro-857 to Ile-861 each bind substrate. An intrachain disulfide couples Cys-458 to Cys-687. Asn-670 (proton acceptor) is an active-site residue. Cys-672 serves as the catalytic Cysteine radical intermediate. The active-site Proton acceptor is the Glu-674.

Belongs to the ribonucleoside diphosphate reductase large chain family. In terms of assembly, tetramer of two alpha and two beta subunits.

The catalysed reaction is a 2'-deoxyribonucleoside 5'-diphosphate + [thioredoxin]-disulfide + H2O = a ribonucleoside 5'-diphosphate + [thioredoxin]-dithiol. Under complex allosteric control mediated by deoxynucleoside triphosphates and ATP binding. The type of nucleotide bound at the specificity site determines substrate preference. It seems probable that ATP makes the enzyme reduce CDP and UDP, dGTP favors ADP reduction and dTTP favors GDP reduction. Provides the precursors necessary for DNA synthesis. Catalyzes the biosynthesis of deoxyribonucleotides from the corresponding ribonucleotides. The sequence is that of Ribonucleoside-diphosphate reductase subunit alpha (nrdA) from Chlamydia muridarum (strain MoPn / Nigg).